The chain runs to 211 residues: Formate dehydrogenase, cytochrome b556(fdo) subunit (211 aa).

The Cytoplasmic segment spans residues 1-17; sequence MKRRDTIVRYTAPERIN. H18 is a binding site for heme b. Residues 18–32 traverse the membrane as a helical segment; the sequence is HWITAFCFILAAVSG. The Periplasmic portion of the chain corresponds to 33-53; that stretch reads LGFLFPSFNWLMQIMGTPQLA. The helical transmembrane segment at 54–72 threads the bilayer; it reads RILHPFVGVVMFASFIIMF. H57 is a binding site for heme b. Residues 73–112 are Cytoplasmic-facing; sequence FRYWHHNLINRDDIFWAKNIRKIVVNEEVGDTGRYNFGQK. Residues 113-130 form a helical membrane-spanning segment; that stretch reads CVFWAAIIFLVLLLVSGV. Residues 131-151 are Periplasmic-facing; it reads IIWRPYFAPAFSIPVIRFALM. Residues 152 to 170 traverse the membrane as a helical segment; sequence LHSFAAVALIVVIMVHIYA. H153 and H167 together coordinate heme b. Over 171–211 the chain is Cytoplasmic; it reads ALWVKGTITAMVEGWVTSAWAKKHHPRWYREVRKTTEKKAE.

This sequence belongs to the formate dehydrogenase gamma subunit family. Formate dehydrogenase is a membrane-bound complex, formed by subunits alpha, beta and gamma. The cofactor is heme.

It localises to the cell inner membrane. Allows to use formate as major electron donor during aerobic respiration. Subunit gamma is probably the cytochrome b556(FDO) component of the formate dehydrogenase. The chain is Formate dehydrogenase, cytochrome b556(fdo) subunit (fdoI) from Escherichia coli O157:H7.